The following is a 298-amino-acid chain: Protein RKD2 (298 aa).

2 stretches are compositionally biased toward basic and acidic residues: residues 1–10 (MADHTTKEQK) and 81–102 (EQNR…VKET). Disordered stretches follow at residues 1-22 (MADH…PSFD) and 73-112 (SSAS…NERH). The 83-residue stretch at 121–203 (SDITTYTTSS…KMEGEENAEK (83 aa)) folds into the RWP-RK domain. Residues 188-222 (NVKELQKMEGEENAEKLQDALEMLEKEKRTIEDLP) are a coiled coil. The tract at residues 241–279 (NHKRKKKRSLKSDQSQVPSCSSSGSVPSDESVDEAGMES) is disordered. The segment covering 252–269 (SDQSQVPSCSSSGSVPSD) has biased composition (low complexity). Residues 270-279 (ESVDEAGMES) are compositionally biased toward acidic residues.

Its subcellular location is the nucleus. Putative transcription factor. In Arabidopsis thaliana (Mouse-ear cress), this protein is Protein RKD2 (RKD2).